Consider the following 263-residue polypeptide: Thiamine thiazole synthase (263 aa).

Residues Ser43, 62–63, Gly70, Val134, and 160–162 each bind NAD(+); these read ER and HID. Asp162 and His177 together coordinate Fe cation. Positions 180 and 227 each coordinate NAD(+). Arg237 serves as a coordination point for glycine.

The protein belongs to the THI4 family. Homooctamer; tetramer of dimers. It depends on Fe(2+) as a cofactor.

The enzyme catalyses hydrogen sulfide + glycine + NAD(+) = ADP-5-ethyl-4-methylthiazole-2-carboxylate + nicotinamide + 3 H2O + H(+). The protein operates within cofactor biosynthesis; thiamine diphosphate biosynthesis. In terms of biological role, involved in the biosynthesis of the thiazole moiety of thiamine. Catalyzes the conversion of NAD and glycine to adenosine diphosphate 5-(2-hydroxyethyl)-4-methylthiazole-2-carboxylate (ADT), an adenylated thiazole intermediate, using free sulfide as a source of sulfur. The protein is Thiamine thiazole synthase of Methanococcus aeolicus (strain ATCC BAA-1280 / DSM 17508 / OCM 812 / Nankai-3).